Here is a 69-residue protein sequence, read N- to C-terminus: Large ribosomal subunit protein bL28 (69 aa).

It belongs to the bacterial ribosomal protein bL28 family.

The protein is Large ribosomal subunit protein bL28 of Desulfovibrio desulfuricans (strain ATCC 27774 / DSM 6949 / MB).